The chain runs to 240 residues: Late expression factor 5 homolog (240 aa).

The protein belongs to the baculoviridae LEF-5 family.

Its function is as follows. Required for late and very late gene expression. In Tortricidae (ClGV), this protein is Late expression factor 5 homolog.